The primary structure comprises 69 residues: Large ribosomal subunit protein uL29 (69 aa).

This sequence belongs to the universal ribosomal protein uL29 family.

In Staphylococcus saprophyticus subsp. saprophyticus (strain ATCC 15305 / DSM 20229 / NCIMB 8711 / NCTC 7292 / S-41), this protein is Large ribosomal subunit protein uL29.